Consider the following 347-residue polypeptide: Holliday junction branch migration complex subunit RuvB (347 aa).

A large ATPase domain (RuvB-L) region spans residues 1-180; the sequence is MTSRVVSPEQ…FGIPCRMNFY (180 aa). ATP contacts are provided by residues Leu-19, Arg-20, Gly-61, Lys-64, Thr-65, Thr-66, 127–129, Arg-170, Tyr-180, and Arg-217; that span reads EDF. Residue Thr-65 coordinates Mg(2+). The tract at residues 181-251 is small ATPAse domain (RuvB-S); it reads EPAELEAIVS…VADAALNRLE (71 aa). The head domain (RuvB-H) stretch occupies residues 254–347; it reads RIGLDAMDRR…LLTRMDEEGE (94 aa). Residues Arg-290, Arg-309, and Arg-314 each contribute to the DNA site.

This sequence belongs to the RuvB family. In terms of assembly, homohexamer. Forms an RuvA(8)-RuvB(12)-Holliday junction (HJ) complex. HJ DNA is sandwiched between 2 RuvA tetramers; dsDNA enters through RuvA and exits via RuvB. An RuvB hexamer assembles on each DNA strand where it exits the tetramer. Each RuvB hexamer is contacted by two RuvA subunits (via domain III) on 2 adjacent RuvB subunits; this complex drives branch migration. In the full resolvosome a probable DNA-RuvA(4)-RuvB(12)-RuvC(2) complex forms which resolves the HJ.

It localises to the cytoplasm. The catalysed reaction is ATP + H2O = ADP + phosphate + H(+). Functionally, the RuvA-RuvB-RuvC complex processes Holliday junction (HJ) DNA during genetic recombination and DNA repair, while the RuvA-RuvB complex plays an important role in the rescue of blocked DNA replication forks via replication fork reversal (RFR). RuvA specifically binds to HJ cruciform DNA, conferring on it an open structure. The RuvB hexamer acts as an ATP-dependent pump, pulling dsDNA into and through the RuvAB complex. RuvB forms 2 homohexamers on either side of HJ DNA bound by 1 or 2 RuvA tetramers; 4 subunits per hexamer contact DNA at a time. Coordinated motions by a converter formed by DNA-disengaged RuvB subunits stimulates ATP hydrolysis and nucleotide exchange. Immobilization of the converter enables RuvB to convert the ATP-contained energy into a lever motion, pulling 2 nucleotides of DNA out of the RuvA tetramer per ATP hydrolyzed, thus driving DNA branch migration. The RuvB motors rotate together with the DNA substrate, which together with the progressing nucleotide cycle form the mechanistic basis for DNA recombination by continuous HJ branch migration. Branch migration allows RuvC to scan DNA until it finds its consensus sequence, where it cleaves and resolves cruciform DNA. The protein is Holliday junction branch migration complex subunit RuvB of Paramagnetospirillum magneticum (strain ATCC 700264 / AMB-1) (Magnetospirillum magneticum).